Here is a 311-residue protein sequence, read N- to C-terminus: Protein translocase subunit SecF (311 aa).

6 helical membrane-spanning segments follow: residues 19-39, 142-162, 166-186, 192-212, 245-265, and 272-292; these read AIYASLFLIGVSLVSLFTQGL, MLAMLYAMVAILIYISFRFEL, LGAVLALVHDVVLTMGFFSVL, LVVVAALLTVVGYSLNDTIVV, ITSLTTVLVLIALFVLGGAVI, and LLFGVGIGTYSSIFVASPLVL.

This sequence belongs to the SecD/SecF family. SecF subfamily. Forms a complex with SecD. Part of the essential Sec protein translocation apparatus which comprises SecA, SecYEG and auxiliary proteins SecDF-YajC and YidC.

The protein resides in the cell inner membrane. Its function is as follows. Part of the Sec protein translocase complex. Interacts with the SecYEG preprotein conducting channel. SecDF uses the proton motive force (PMF) to complete protein translocation after the ATP-dependent function of SecA. This chain is Protein translocase subunit SecF, found in Magnetococcus marinus (strain ATCC BAA-1437 / JCM 17883 / MC-1).